The sequence spans 639 residues: tRNA (uracil(54)-C(5))-methyltransferase (639 aa).

Residues 78–113 are disordered; that stretch reads VPPTMKHTVDNKRLSSPLTDSGNRRTKKPKLRKYKA. Phosphoserine is present on residues Ser92 and Ser93. Basic residues predominate over residues 101–113; sequence RRTKKPKLRKYKA. A TRAM domain is found at 163–228; it reads LQYHREVKNV…PYYVESDLLD (66 aa). Gln461, Tyr496, Glu517, and Asp564 together coordinate S-adenosyl-L-methionine. The Nucleophile role is filled by Cys591. Glu631 (proton acceptor) is an active-site residue.

The protein belongs to the class I-like SAM-binding methyltransferase superfamily. RNA M5U methyltransferase family.

The catalysed reaction is uridine(54) in tRNA + S-adenosyl-L-methionine = 5-methyluridine(54) in tRNA + S-adenosyl-L-homocysteine + H(+). In terms of biological role, catalyzes the formation of 5-methyl-uridine at position 54 (m5U54) in all tRNA. May also have a role in tRNA stabilization or maturation. The chain is tRNA (uracil(54)-C(5))-methyltransferase (TRM2) from Saccharomyces cerevisiae (strain ATCC 204508 / S288c) (Baker's yeast).